Consider the following 4427-residue polypeptide: Dynein axonemal heavy chain 2 (4427 aa).

The tract at residues Met-1 to Glu-73 is disordered. The segment at Met-1–Gln-1764 is stem. Polar residues predominate over residues Arg-14–Gly-23. Residues Leu-50–Leu-59 show a composition bias toward basic and acidic residues. A TPR 1 repeat occupies Glu-1404–Val-1439. 4 AAA regions span residues Tyr-1765–Tyr-1986, Glu-2046–Lys-2273, Arg-2378–Gly-2625, and Glu-2722–His-2974. ATP-binding positions include Gly-1803–Thr-1810, Gly-2084–Thr-2091, and Gly-2416–Thr-2423. The TPR 2 repeat unit spans residues Asn-2721–Pro-2754. Gly-2762–Gln-2769 contributes to the ATP binding site. Positions Tyr-2989–Met-3272 are stalk. Residues Phe-3012–Ile-3049 are a coiled coil. A TPR 3 repeat occupies Val-3072–Leu-3105. 2 coiled-coil regions span residues Lys-3216–Leu-3304 and Val-3523–Leu-3567. AAA regions lie at residues Leu-3358–Glu-3588 and Val-3804–Leu-4023. TPR repeat units follow at residues Ser-4072–Gly-4104 and Met-4105–Ile-4140.

This sequence belongs to the dynein heavy chain family. As to quaternary structure, part of the axonemal inner dynein arm complex that consists of at least two heavy chains and a number of intermediate and light chains. Interacts with DNAI4. Expressed primarily in trachea and testis, 2 tissues containing axonemal structures. Also expressed in lung. Expressed in spermatozoa (at protein level).

The protein resides in the cytoplasm. It is found in the cytoskeleton. The protein localises to the cilium axoneme. It localises to the flagellum axoneme. Its function is as follows. As part of the axonemal inner dynein arm complex plays a central role in ciliary beat. Expressed in sperm flagellum, it is required for sperm motility. Dyneins are microtubule-based molecular motors possessing ATPase activities that can convert the chemical energy of ATP into relative sliding between adjacent microtubule doublets to generate ciliary bending. This is Dynein axonemal heavy chain 2 from Homo sapiens (Human).